The primary structure comprises 221 residues: Cutinase 3 (221 aa).

Residues 1–17 (MRFHTILLAALASLVIA) form the signal peptide. 2 cysteine pairs are disulfide-bonded: C44–C122 and C70–C84. S133 serves as the catalytic Nucleophile. Cysteines 184 and 191 form a disulfide. D188 is a catalytic residue. H201 functions as the Proton donor/acceptor in the catalytic mechanism.

Belongs to the cutinase family.

It localises to the secreted. It carries out the reaction cutin + H2O = cutin monomers.. Functionally, catalyzes the hydrolysis of complex carboxylic polyesters found in the cell wall of plants. Degrades cutin, a macromolecule that forms the structure of the plant cuticle. Also degrades suberin, a specialized macromolecule found in the cell wall of various plant tissues. The polypeptide is Cutinase 3 (Emericella nidulans (strain FGSC A4 / ATCC 38163 / CBS 112.46 / NRRL 194 / M139) (Aspergillus nidulans)).